We begin with the raw amino-acid sequence, 45 residues long: Small, acid-soluble spore protein P (45 aa).

Residues Met1–Lys12 are compositionally biased toward basic and acidic residues. The segment at Met1–Gly45 is disordered.

It belongs to the SspP family.

The protein localises to the spore core. The polypeptide is Small, acid-soluble spore protein P (Halalkalibacterium halodurans (strain ATCC BAA-125 / DSM 18197 / FERM 7344 / JCM 9153 / C-125) (Bacillus halodurans)).